Here is a 1054-residue protein sequence, read N- to C-terminus: FERM, ARHGEF and pleckstrin domain-containing protein 2 (1054 aa).

The FERM domain maps to Leu44–Asp324. Ser389 and Ser439 each carry phosphoserine. Positions Glu421 to Arg527 are disordered. Residues Pro468–Pro492 show a composition bias toward low complexity. The DH domain occupies Glu535–Ile726. A PH 1 domain is found at Glu755–Gln852. The segment at Ser856–Arg894 is disordered. Residues Glu929–Ser1026 enclose the PH 2 domain. The tract at residues Gly1029–Glu1054 is disordered.

In terms of assembly, interacts with PLXNA1. Interaction with PLXNA1 or PIP5K1C lowers its guanine nucleotide exchange activity. Dissociates from PLXNA1 when SEMA3A binds to the receptor. Interacts with PIP5K1C via its FERM domain. The interaction with PIP5K1C is enhanced by SEMA3A binding. Interacts with RAC1.

Functionally, functions as a guanine nucleotide exchange factor that activates RAC1. May have relatively low activity. Plays a role in the response to class 3 semaphorins and remodeling of the actin cytoskeleton. Plays a role in TNFSF11-mediated osteoclast differentiation, especially in podosome rearrangement and reorganization of the actin cytoskeleton. Regulates the activation of ITGB3, integrin signaling and cell adhesion. The polypeptide is FERM, ARHGEF and pleckstrin domain-containing protein 2 (FARP2) (Homo sapiens (Human)).